An 86-amino-acid polypeptide reads, in one-letter code: DNA replication protein 1 (86 aa).

Residues 38–67 (LELEKKMTKLEHENKLMKNALYELSRMENN) are a coiled coil.

It belongs to the phi29likevirus DNA replication protein 1 family. As to quaternary structure, homomultimer. Self-associates into large complexes forming long filamentous structures. Interacts (via N-terminus) with the primer terminal protein. Interacts with host FtsZ protein.

It localises to the host membrane. In terms of biological role, protein that assembles into highly ordered structures and provides a specific site for viral DNA replication. Probably anchors the viral DNA replisome to the host membrane. In Bacillus subtilis (Bacteriophage phi-29), this protein is DNA replication protein 1 (1).